Reading from the N-terminus, the 466-residue chain is Voltage-gated potassium channel regulatory subunit KCNG2 (466 aa).

The Cytoplasmic segment spans residues 1–174; it reads MEPWPCSPGG…DVVDNPHSGL (174 aa). The disordered stretch occupies residues 131–155; the sequence is AEARAGPTERGAQGSPARALGPRGR. The chain crosses the membrane as a helical span at residues 175–196; that stretch reads AGKLFACVSVSFVAVTAVGLCL. Residues 197 to 217 are Extracellular-facing; sequence STMPDIRAEEERGECSPKCRS. A helical membrane pass occupies residues 218-239; sequence LFVLETVCVAWFSFEFLLRSLQ. The Cytoplasmic portion of the chain corresponds to 240-250; the sequence is AESKCAFLRAP. Residues 251–271 traverse the membrane as a helical segment; that stretch reads LNIIDILALLPFYVSLLLGLA. The Extracellular segment spans residues 272-283; sequence AGPGGTKLLERA. The chain crosses the membrane as a helical; Voltage-sensor span at residues 284-304; that stretch reads GLVLRLLRALRVLYVMRLARH. Residues 305 to 319 are Cytoplasmic-facing; the sequence is SLGLRSLGLTMRRCA. The chain crosses the membrane as a helical span at residues 320-341; the sequence is REFGLLLLFLCVAMALFAPLVH. Over 342–356 the chain is Extracellular; sequence LAERELGARRDFSSV. The helical intramembrane region spans 357 to 368; the sequence is PASYWWAVISMT. A Selectivity filter motif is present at residues 369–374; it reads TVGYGD. Residues 369–376 lie within the membrane without spanning it; that stretch reads TVGYGDMV. Topologically, residues 377–383 are extracellular; that stretch reads PRSLPGQ. The helical transmembrane segment at 384-412 threads the bilayer; that stretch reads VVALSSILSGILLMAFPVTSIFHTFSRSY. Residues 413 to 466 lie on the Cytoplasmic side of the membrane; that stretch reads SELKEQQQRAASPEPALQEDSTHSATATEDSSQGPDSAGLADDSADALWVRAGR. Residues 416 to 466 form a disordered region; that stretch reads KEQQQRAASPEPALQEDSTHSATATEDSSQGPDSAGLADDSADALWVRAGR. A compositionally biased stretch (polar residues) spans 435–447; the sequence is HSATATEDSSQGP. Residues 448–460 show a composition bias toward low complexity; it reads DSAGLADDSADAL.

Belongs to the potassium channel family. G (TC 1.A.1.2) subfamily. Kv6.2/KCNG2 sub-subfamily. As to quaternary structure, heterodimer with KCNB1. As to expression, highly expressed in heart, liver, skeletal muscle, kidney and pancreas. Detected at low levels in brain, lung and placenta.

The protein resides in the cell membrane. Regulatory alpha-subunit of the voltage-gated potassium (Kv) channel which, when coassembled with KCNB1, can modulate the kinetics and conductance-voltage relationship. Modulates channel activity by shifting the threshold and the half-maximal activation to more negative values. Potassium channel subunit that does not form functional channels by itself. The chain is Voltage-gated potassium channel regulatory subunit KCNG2 from Homo sapiens (Human).